Consider the following 671-residue polypeptide: K(+)-insensitive pyrophosphate-energized proton pump (671 aa).

The next 5 membrane-spanning stretches (helical) occupy residues 4–24 (LIFT…FFAK), 57–77 (TIAV…DEGL), 79–99 (IAAG…IGMS), 128–148 (AVTG…LYIL), and 156–176 (VGFG…GGIF). K178 lines the substrate pocket. Residues D181, D185, N208, and D211 each coordinate Mg(2+). 6 consecutive transmembrane segments (helical) span residues 223 to 243 (LFET…LIIG), 249 to 269 (VLYP…SVFF), 285 to 305 (GVGG…GFLM), 310 to 330 (FFYV…VTEY), 365 to 385 (TLVP…IVGG), and 393 to 413 (LYGI…IVAL). D421 serves as a coordination point for Mg(2+). Helical transmembrane passes span 452 to 472 (AVTK…LFAD), 490 to 510 (VVLS…AVMM), 558 to 578 (MAMP…FLGP), and 579 to 599 (EALA…ALMM). 3 residues coordinate Ca(2+): D607, D633, and D637. K640 is a binding site for substrate. Residues 650 to 670 (LIKVVNMVAILFSPLIIGGGF) traverse the membrane as a helical segment.

Belongs to the H(+)-translocating pyrophosphatase (TC 3.A.10) family. K(+)-insensitive subfamily. In terms of assembly, homodimer. It depends on Mg(2+) as a cofactor.

The protein resides in the cell membrane. The enzyme catalyses diphosphate + H2O + H(+)(in) = 2 phosphate + 2 H(+)(out). Proton pump that utilizes the energy of pyrophosphate hydrolysis as the driving force for proton movement across the membrane. Generates a proton motive force. The chain is K(+)-insensitive pyrophosphate-energized proton pump from Methanosarcina mazei (strain ATCC BAA-159 / DSM 3647 / Goe1 / Go1 / JCM 11833 / OCM 88) (Methanosarcina frisia).